We begin with the raw amino-acid sequence, 635 residues long: Threonine--tRNA ligase (635 aa).

In terms of domain architecture, TGS spans 1–61 (MIQITLPDSS…SQDSALSIVT (61 aa)). The tract at residues 242 to 533 (DHRKLGKELD…LIEEHAGALP (292 aa)) is catalytic. Zn(2+) is bound by residues cysteine 333, histidine 384, and histidine 510.

Belongs to the class-II aminoacyl-tRNA synthetase family. In terms of assembly, homodimer. The cofactor is Zn(2+).

The protein resides in the cytoplasm. The catalysed reaction is tRNA(Thr) + L-threonine + ATP = L-threonyl-tRNA(Thr) + AMP + diphosphate + H(+). Functionally, catalyzes the attachment of threonine to tRNA(Thr) in a two-step reaction: L-threonine is first activated by ATP to form Thr-AMP and then transferred to the acceptor end of tRNA(Thr). Also edits incorrectly charged L-seryl-tRNA(Thr). The sequence is that of Threonine--tRNA ligase from Polaromonas naphthalenivorans (strain CJ2).